Consider the following 557-residue polypeptide: Dihydroxy-acid dehydratase (557 aa).

Aspartate 78 provides a ligand contact to Mg(2+). Position 119 (cysteine 119) interacts with [2Fe-2S] cluster. Mg(2+) is bound by residues aspartate 120 and lysine 121. An N6-carboxylysine modification is found at lysine 121. A [2Fe-2S] cluster-binding site is contributed by cysteine 192. Glutamate 443 contributes to the Mg(2+) binding site. The active-site Proton acceptor is the serine 469.

The protein belongs to the IlvD/Edd family. Homodimer. It depends on [2Fe-2S] cluster as a cofactor. The cofactor is Mg(2+).

The catalysed reaction is (2R)-2,3-dihydroxy-3-methylbutanoate = 3-methyl-2-oxobutanoate + H2O. The enzyme catalyses (2R,3R)-2,3-dihydroxy-3-methylpentanoate = (S)-3-methyl-2-oxopentanoate + H2O. It functions in the pathway amino-acid biosynthesis; L-isoleucine biosynthesis; L-isoleucine from 2-oxobutanoate: step 3/4. Its pathway is amino-acid biosynthesis; L-valine biosynthesis; L-valine from pyruvate: step 3/4. Functions in the biosynthesis of branched-chain amino acids. Catalyzes the dehydration of (2R,3R)-2,3-dihydroxy-3-methylpentanoate (2,3-dihydroxy-3-methylvalerate) into 2-oxo-3-methylpentanoate (2-oxo-3-methylvalerate) and of (2R)-2,3-dihydroxy-3-methylbutanoate (2,3-dihydroxyisovalerate) into 2-oxo-3-methylbutanoate (2-oxoisovalerate), the penultimate precursor to L-isoleucine and L-valine, respectively. This chain is Dihydroxy-acid dehydratase, found in Persephonella marina (strain DSM 14350 / EX-H1).